A 313-amino-acid polypeptide reads, in one-letter code: MGANSLPTDATLDLDEQISQLMQCKPLSEQQVRALCEKAKEILMDESNVQPVKSPVTICGDIHGQFHDLAELFRIGGKCPDTNYLFMGDYVDRGYYSVETVTLLVGLKVRYPQRITILRGNHESRQITQVYGFYDECLRKYGNANVWKIFTDLFDYFPLTALVESEIFCLHGGLSPSIETLDNIRNFDRVQEVPHEGPMCDLLWSDPDDRCGWGISPRGAGYTFGQDISEQFNHTNNLKLIARAHQLVMDGFNWAHEQKVVTIFSAPNYCYRCGNMASILEVDDCRNHTFIQFEPAPRRGEPDVTRRTPDYFL.

Positions 61, 63, 89, and 121 each coordinate Mn(2+). His122 functions as the Proton donor in the catalytic mechanism. Mn(2+) is bound by residues His171 and His245. Residue Leu313 is modified to Leucine methyl ester.

Belongs to the PPP phosphatase family. PP-2A subfamily. PP2A consists of a common heterodimeric core enzyme, composed of a 36 kDa catalytic subunit (subunit C) and a 65 kDa constant regulatory subunit (subunit A), that associates with a variety of regulatory subunits such as subunits B (the R2/B/PR55/B55, R3/B''/PR72/PR130/PR59 and R5/B'/B56 families). Interacts with SIC/RON3. The cofactor is Mn(2+). Reversibly methyl esterified on Leu-313 by leucine carboxyl methyltransferase 1 (LCMT1) and pectin methylesterase 1 (PME1). Carboxyl methylation influences the affinity of the catalytic subunit for the different regulatory subunits, thereby modulating the PP2A holoenzyme's substrate specificity, enzyme activity and cellular localization. In terms of processing, phosphorylation of either threonine (by autophosphorylation-activated protein kinase) or tyrosine results in inactivation of the phosphatase. Auto-dephosphorylation has been suggested as a mechanism for reactivation.

The protein localises to the cytoplasm. It catalyses the reaction O-phospho-L-seryl-[protein] + H2O = L-seryl-[protein] + phosphate. The enzyme catalyses O-phospho-L-threonyl-[protein] + H2O = L-threonyl-[protein] + phosphate. In terms of biological role, functions redundantly with PP2A3, and is involved in establishing auxin gradients, apical-basal axis of polarity and root and shoot apical meristem during embryogenesis. May dephosphorylate PIN1 and regulate its subcellular distribution for polar auxin transport. The holoenzyme composed of PP2AA1, PP2A4 and B'ZETA or B'ETA acts as a negative regulator of plant innate immunity by controlling BAK1 phosphorylation state and activation in surface-localized immune receptor complexes. The polypeptide is Serine/threonine-protein phosphatase PP2A-4 catalytic subunit (Arabidopsis thaliana (Mouse-ear cress)).